We begin with the raw amino-acid sequence, 375 residues long: Queuine tRNA-ribosyltransferase (375 aa).

The active-site Proton acceptor is D89. Residues 89-93 (DSGGF), D143, Q185, and G212 each bind substrate. An RNA binding region spans residues 243–249 (GVGKPED). The Nucleophile role is filled by D262. The tract at residues 267–271 (TRNAR) is RNA binding; important for wobble base 34 recognition. Residues C300, C302, C305, and H331 each coordinate Zn(2+).

Belongs to the queuine tRNA-ribosyltransferase family. Homodimer. Within each dimer, one monomer is responsible for RNA recognition and catalysis, while the other monomer binds to the replacement base PreQ1. The cofactor is Zn(2+).

It carries out the reaction 7-aminomethyl-7-carbaguanine + guanosine(34) in tRNA = 7-aminomethyl-7-carbaguanosine(34) in tRNA + guanine. The protein operates within tRNA modification; tRNA-queuosine biosynthesis. In terms of biological role, catalyzes the base-exchange of a guanine (G) residue with the queuine precursor 7-aminomethyl-7-deazaguanine (PreQ1) at position 34 (anticodon wobble position) in tRNAs with GU(N) anticodons (tRNA-Asp, -Asn, -His and -Tyr). Catalysis occurs through a double-displacement mechanism. The nucleophile active site attacks the C1' of nucleotide 34 to detach the guanine base from the RNA, forming a covalent enzyme-RNA intermediate. The proton acceptor active site deprotonates the incoming PreQ1, allowing a nucleophilic attack on the C1' of the ribose to form the product. After dissociation, two additional enzymatic reactions on the tRNA convert PreQ1 to queuine (Q), resulting in the hypermodified nucleoside queuosine (7-(((4,5-cis-dihydroxy-2-cyclopenten-1-yl)amino)methyl)-7-deazaguanosine). The chain is Queuine tRNA-ribosyltransferase from Pseudoalteromonas translucida (strain TAC 125).